The primary structure comprises 594 residues: Probable Xaa-Pro aminopeptidase P (594 aa).

The Mn(2+) site is built by D391, D402, E500, and E514.

The protein belongs to the peptidase M24B family. The cofactor is Mn(2+).

It catalyses the reaction Release of any N-terminal amino acid, including proline, that is linked to proline, even from a dipeptide or tripeptide.. Catalyzes the removal of a penultimate prolyl residue from the N-termini of peptides. The chain is Probable Xaa-Pro aminopeptidase P (ampp) from Pyrenophora tritici-repentis (strain Pt-1C-BFP) (Wheat tan spot fungus).